Reading from the N-terminus, the 476-residue chain is GTPase Der (476 aa).

EngA-type G domains lie at 3–167 (FTVA…GEDM) and 205–380 (LRVA…KTWN). Residues 9–16 (GRPNVGKS), 56–60 (DTAGL), 119–122 (NKSE), 211–218 (GRPNAGKS), 258–262 (DTAGM), and 323–326 (NKWD) contribute to the GTP site. In terms of domain architecture, KH-like spans 381–465 (RRISTAKLNR…PIRVHYRGSD (85 aa)).

Belongs to the TRAFAC class TrmE-Era-EngA-EngB-Septin-like GTPase superfamily. EngA (Der) GTPase family. As to quaternary structure, associates with the 50S ribosomal subunit.

Its function is as follows. GTPase that plays an essential role in the late steps of ribosome biogenesis. This is GTPase Der from Agrobacterium fabrum (strain C58 / ATCC 33970) (Agrobacterium tumefaciens (strain C58)).